Consider the following 425-residue polypeptide: SRRM2 protein homolog rsr-2 (425 aa).

One can recognise a CWF21 domain in the interval 57–100 (MDHNRKRQIEVKCTEFEMLLEDKGLDDEDIERKVGEYRKNLLKQ). 2 disordered regions span residues 109–131 (DEEL…RDKM) and 161–425 (ESEL…SDSE). The segment covering 164 to 178 (LPQKDDKEKLLETLR) has biased composition (basic and acidic residues). Low complexity predominate over residues 189-202 (SSSSSSSSSSSSES). Residues 210 to 221 (RKDRKKKEKKQK) show a composition bias toward basic residues. 2 stretches are compositionally biased toward basic and acidic residues: residues 222-251 (LKEM…KEEP) and 259-305 (DSRK…EDRT). Over residues 306-317 (VRRRSPERRRQQ) the composition is skewed to basic residues. Composition is skewed to basic and acidic residues over residues 321–332 (SVERRKSPQRRD), 355–366 (SRMDELEVKQEP), and 383–398 (RVEK…RKSS). The span at 399–425 (SESSSGSSDSDSSSDSSSSSDSSSDSE) shows a compositional bias: low complexity.

It belongs to the CWC21 family. Interacts with RNA polymerase II subunit ama-1, binding to both hyperphosphorylated and hypophosphorylated forms, but more strongly when ama-1 is phosphorylated at 'Ser-5' of the C-terminal heptapeptide repeat. Interacts with pre-mRNA-processing factor prp-19. May also interact with pre-mRNA-splicing factor 8 homolog prp-8. Expressed in the proximal germline, but not in the most distal part where mitosis takes place. May be expressed ubiquitously in somatic cells.

Its subcellular location is the nucleus. The protein localises to the chromosome. It is found in the nuclear body. In terms of biological role, plays a role in pre-mRNA splicing as component of the spliceosome. Involved in modulating global transcription, probably acting via interaction with RNA polymerase II. Influences the chromatin distribution and phosphorylation state of RNA polymerase II subunit ama-1. Involved in regulating the germline sex determination pathway. This is SRRM2 protein homolog rsr-2 from Caenorhabditis elegans.